Consider the following 823-residue polypeptide: Endoplasmin homolog (823 aa).

An N-terminal signal peptide occupies residues 1 to 23 (MRKRTLVSVLFLFSLLFLLPDQG). The disordered stretch occupies residues 29-60 (NAEESSDDVTDPPKVEEKIGGHGGLSTDSDVV). Over residues 39-48 (DPPKVEEKIG) the composition is skewed to basic and acidic residues. ATP-binding positions include glutamate 106, asparagine 110, aspartate 154, methionine 159, asparagine 167, lysine 173, 174 to 175 (SG), 194 to 199 (QFGVGF), phenylalanine 199, and threonine 246. The N-linked (GlcNAc...) asparagine glycan is linked to asparagine 110. A disordered region spans residues 289-328 (ETEVPVEEDESADEETETTSTEEEKEEDAEEEDGEKKQKT). Residues 290 to 321 (TEVPVEEDESADEETETTSTEEEKEEDAEEED) show a composition bias toward acidic residues. Asparagine 452 and asparagine 620 each carry an N-linked (GlcNAc...) asparagine glycan. Acidic residues predominate over residues 777–792 (VADEEIEAAEEPETSE). The interval 777–823 (VADEEIEAAEEPETSEATETKSDDLAGGLNIEAEPVEQQEENTKDEL) is disordered. The Prevents secretion from ER signature appears at 820–823 (KDEL).

Belongs to the heat shock protein 90 family. As to quaternary structure, interacts with FKBP42. Interacts with P23-1. As to expression, ubiquitous.

It localises to the endoplasmic reticulum lumen. May have a molecular chaperone role in the processing of secreted materials. Required for shoot apical meristem (SAM), root apical meristem (RAM) and floral meristem (FM) formation, probably by regulating the folding of CLAVATA proteins (CLVs). Also involved in pollen tube elongation. Involved in resistance to tunicamycin- or high calcium-induced ER stresses. Possesses ATPase activity. The chain is Endoplasmin homolog from Arabidopsis thaliana (Mouse-ear cress).